Reading from the N-terminus, the 295-residue chain is Ribosomal RNA small subunit methyltransferase A (295 aa).

S-adenosyl-L-methionine-binding residues include Asn25, Leu27, Gly52, Glu73, Asp98, and Asn120.

This sequence belongs to the class I-like SAM-binding methyltransferase superfamily. rRNA adenine N(6)-methyltransferase family. RsmA subfamily.

It localises to the cytoplasm. It catalyses the reaction adenosine(1518)/adenosine(1519) in 16S rRNA + 4 S-adenosyl-L-methionine = N(6)-dimethyladenosine(1518)/N(6)-dimethyladenosine(1519) in 16S rRNA + 4 S-adenosyl-L-homocysteine + 4 H(+). Functionally, specifically dimethylates two adjacent adenosines (A1518 and A1519) in the loop of a conserved hairpin near the 3'-end of 16S rRNA in the 30S particle. May play a critical role in biogenesis of 30S subunits. This chain is Ribosomal RNA small subunit methyltransferase A, found in Desulfotalea psychrophila (strain LSv54 / DSM 12343).